We begin with the raw amino-acid sequence, 163 residues long: Cyclic pyranopterin monophosphate synthase (163 aa).

Residues 76 to 78 and 114 to 115 each bind substrate; these read LCH and ME. Asp129 is an active-site residue.

Belongs to the MoaC family. As to quaternary structure, homohexamer; trimer of dimers.

The enzyme catalyses (8S)-3',8-cyclo-7,8-dihydroguanosine 5'-triphosphate = cyclic pyranopterin phosphate + diphosphate. It functions in the pathway cofactor biosynthesis; molybdopterin biosynthesis. Its function is as follows. Catalyzes the conversion of (8S)-3',8-cyclo-7,8-dihydroguanosine 5'-triphosphate to cyclic pyranopterin monophosphate (cPMP). The polypeptide is Cyclic pyranopterin monophosphate synthase (Desulfovibrio desulfuricans (strain ATCC 27774 / DSM 6949 / MB)).